We begin with the raw amino-acid sequence, 432 residues long: Trigger factor (432 aa).

The region spanning 161–246 (EDRVTLDFTG…LKKVEERELP (86 aa)) is the PPIase FKBP-type domain.

Belongs to the FKBP-type PPIase family. Tig subfamily.

The protein localises to the cytoplasm. The enzyme catalyses [protein]-peptidylproline (omega=180) = [protein]-peptidylproline (omega=0). In terms of biological role, involved in protein export. Acts as a chaperone by maintaining the newly synthesized protein in an open conformation. Functions as a peptidyl-prolyl cis-trans isomerase. The chain is Trigger factor from Salmonella arizonae (strain ATCC BAA-731 / CDC346-86 / RSK2980).